Here is a 346-residue protein sequence, read N- to C-terminus: G-protein coupled receptor 42 (346 aa).

Residues 1–19 (MDTGPDQSYFSGNHWFVFS) are Extracellular-facing. The helical transmembrane segment at 20–40 (VYLLTFLVGLPLNLLALVVFV) threads the bilayer. Over 41-47 (GKLRCRP) the chain is Cytoplasmic. A helical transmembrane segment spans residues 48 to 68 (VAVDVLLLNLTASDLLLLLFL). The Extracellular portion of the chain corresponds to 69–90 (PFRMVEAANGMHWPLPFILCPL). The helical transmembrane segment at 91–111 (SGFIFFTTIYLTALFLAAVSI) threads the bilayer. At 112-132 (ERFLSVAHPLWYKTRPRLGQA) the chain is on the cytoplasmic side. The chain crosses the membrane as a helical span at residues 133 to 153 (GLVSVACWLLASAHCSVVYVI). The Extracellular portion of the chain corresponds to 154–178 (EFSGDISHSQGTNGTCYLEFRKDQL). Asparagine 166 is a glycosylation site (N-linked (GlcNAc...) asparagine). Residues 179–199 (AILLPVRLEMAVVLFVVPLII) form a helical membrane-spanning segment. Topologically, residues 200 to 222 (TSYCYSRLVWILGRGGSHRRQRR) are cytoplasmic. A helical transmembrane segment spans residues 223–243 (VAGLVAATLLNFLVCFGPYNV). The Extracellular segment spans residues 244 to 258 (SHVVGYICGESPVWR). A helical transmembrane segment spans residues 259–279 (IYVTLLSTLNSCVDPFVYYFS). Residues 280 to 346 (SSGFQADFHE…TGGQVACAEN (67 aa)) lie on the Cytoplasmic side of the membrane. The segment covering 307–330 (MELKEQKGGEEQRADRPAERKTSE) has biased composition (basic and acidic residues). Positions 307 to 346 (MELKEQKGGEEQRADRPAERKTSEHSQGCGTGGQVACAEN) are disordered.

The protein belongs to the G-protein coupled receptor 1 family.

The protein localises to the cell membrane. Its function is as follows. G protein-coupled receptor that is activated by short chain fatty acids (SCFAs), such as propionate. Hence may play a role in the regulation of whole-body energy homeostasis and/or in intestinal immunity. The chain is G-protein coupled receptor 42 (GPR42) from Homo sapiens (Human).